The following is a 310-amino-acid chain: HPr kinase/phosphorylase (310 aa).

Catalysis depends on residues His-136 and Lys-157. 151–158 (GDSGIGKS) contacts ATP. Residue Ser-158 coordinates Mg(2+). Asp-175 functions as the Proton acceptor; for phosphorylation activity. Proton donor; for dephosphorylation activity in the catalytic mechanism. The interval 199–208 (LEIRGLGIIN) is important for the catalytic mechanism of both phosphorylation and dephosphorylation. Residue Glu-200 participates in Mg(2+) binding. Arg-241 is an active-site residue. The important for the catalytic mechanism of dephosphorylation stretch occupies residues 262–267 (PVRPGR).

Belongs to the HPrK/P family. Homohexamer. The cofactor is Mg(2+).

It carries out the reaction [HPr protein]-L-serine + ATP = [HPr protein]-O-phospho-L-serine + ADP + H(+). The enzyme catalyses [HPr protein]-O-phospho-L-serine + phosphate + H(+) = [HPr protein]-L-serine + diphosphate. Functionally, catalyzes the ATP- as well as the pyrophosphate-dependent phosphorylation of a specific serine residue in HPr, a phosphocarrier protein of the phosphoenolpyruvate-dependent sugar phosphotransferase system (PTS). HprK/P also catalyzes the pyrophosphate-producing, inorganic phosphate-dependent dephosphorylation (phosphorolysis) of seryl-phosphorylated HPr (P-Ser-HPr). The two antagonistic activities of HprK/P are regulated by several intracellular metabolites, which change their concentration in response to the absence or presence of rapidly metabolisable carbon sources (glucose, fructose, etc.) in the growth medium. Therefore, by controlling the phosphorylation state of HPr, HPrK/P is a sensor enzyme that plays a major role in the regulation of carbon metabolism and sugar transport: it mediates carbon catabolite repression (CCR), and regulates PTS-catalyzed carbohydrate uptake and inducer exclusion. The sequence is that of HPr kinase/phosphorylase from Staphylococcus aureus (strain Mu3 / ATCC 700698).